Consider the following 203-residue polypeptide: Small ribosomal subunit protein uS4c (203 aa).

Residues 15-42 form a disordered region; that stretch reads LGALPGLTSKRPRAGSDPRNQELSGNKS. Positions 89-150 constitute an S4 RNA-binding domain; sequence MRLDNILFRL…DQKSKAMIQN (62 aa).

It belongs to the universal ribosomal protein uS4 family. Part of the 30S ribosomal subunit. Contacts protein S5. The interaction surface between S4 and S5 is involved in control of translational fidelity.

The protein localises to the plastid. It is found in the chloroplast. Its function is as follows. One of the primary rRNA binding proteins, it binds directly to 16S rRNA where it nucleates assembly of the body of the 30S subunit. In terms of biological role, with S5 and S12 plays an important role in translational accuracy. The protein is Small ribosomal subunit protein uS4c (rps4) of Oenothera elata subsp. hookeri (Hooker's evening primrose).